We begin with the raw amino-acid sequence, 239 residues long: RNA polymerase sigma factor FliA (239 aa).

The interval 16–88 (LWQRYVPLVR…MLDELRSRDW (73 aa)) is sigma-70 factor domain-2. The short motif at 43-46 (DLLQ) is the Interaction with polymerase core subunit RpoC element. The tract at residues 96–166 (NAREVAQAMG…IELVTEEHQQ (71 aa)) is sigma-70 factor domain-3. The sigma-70 factor domain-4 stretch occupies residues 185–233 (AIESLPEREQLVLTLYYQEELNLKEIGAVLEVGESRVSQLHSQAIKRLR). The segment at residues 207 to 226 (LKEIGAVLEVGESRVSQLHS) is a DNA-binding region (H-T-H motif).

Belongs to the sigma-70 factor family. FliA subfamily.

Its subcellular location is the cytoplasm. In terms of biological role, sigma factors are initiation factors that promote the attachment of RNA polymerase to specific initiation sites and are then released. This sigma factor controls the expression of flagella-related genes. This is RNA polymerase sigma factor FliA from Salmonella typhi.